A 363-amino-acid polypeptide reads, in one-letter code: Putative aryl-alcohol dehydrogenase AAD3 (363 aa).

The protein belongs to the aldo/keto reductase family. Aldo/keto reductase 2 subfamily.

The protein is Putative aryl-alcohol dehydrogenase AAD3 (AAD3) of Saccharomyces cerevisiae (strain ATCC 204508 / S288c) (Baker's yeast).